Consider the following 466-residue polypeptide: 3-isopropylmalate dehydratase large subunit (466 aa).

The [4Fe-4S] cluster site is built by Cys347, Cys407, and Cys410.

The protein belongs to the aconitase/IPM isomerase family. LeuC type 1 subfamily. As to quaternary structure, heterodimer of LeuC and LeuD. Requires [4Fe-4S] cluster as cofactor.

The catalysed reaction is (2R,3S)-3-isopropylmalate = (2S)-2-isopropylmalate. Its pathway is amino-acid biosynthesis; L-leucine biosynthesis; L-leucine from 3-methyl-2-oxobutanoate: step 2/4. Functionally, catalyzes the isomerization between 2-isopropylmalate and 3-isopropylmalate, via the formation of 2-isopropylmaleate. The polypeptide is 3-isopropylmalate dehydratase large subunit (Shigella flexneri).